The chain runs to 145 residues: Large ribosomal subunit protein uL15 (145 aa).

Residues Met1–Gly52 form a disordered region. A compositionally biased stretch (gly residues) spans Arg21–Ala31.

The protein belongs to the universal ribosomal protein uL15 family. In terms of assembly, part of the 50S ribosomal subunit.

Functionally, binds to the 23S rRNA. The chain is Large ribosomal subunit protein uL15 from Acidithiobacillus ferrooxidans (strain ATCC 53993 / BNL-5-31) (Leptospirillum ferrooxidans (ATCC 53993)).